We begin with the raw amino-acid sequence, 351 residues long: Dihydroorotate dehydrogenase (quinone) (351 aa).

Residues 61–65 and Thr-85 each bind FMN; that span reads AGLDK. Position 65 (Lys-65) interacts with substrate. Position 110–114 (110–114) interacts with substrate; it reads NRMGF. FMN-binding residues include Asn-139 and Asn-172. Position 172 (Asn-172) interacts with substrate. The active-site Nucleophile is the Ser-175. Asn-177 is a binding site for substrate. Residues Lys-217 and Thr-245 each coordinate FMN. 246–247 is a substrate binding site; that stretch reads NT. FMN contacts are provided by residues Gly-268, Gly-297, and 318 to 319; that span reads YS.

It belongs to the dihydroorotate dehydrogenase family. Type 2 subfamily. As to quaternary structure, monomer. The cofactor is FMN.

It localises to the cell membrane. The catalysed reaction is (S)-dihydroorotate + a quinone = orotate + a quinol. Its pathway is pyrimidine metabolism; UMP biosynthesis via de novo pathway; orotate from (S)-dihydroorotate (quinone route): step 1/1. Catalyzes the conversion of dihydroorotate to orotate with quinone as electron acceptor. This is Dihydroorotate dehydrogenase (quinone) from Xanthomonas axonopodis pv. citri (strain 306).